The primary structure comprises 500 residues: L-arabinose isomerase (500 aa).

Mn(2+)-binding residues include Glu306, Glu333, His350, and His450.

Belongs to the arabinose isomerase family. In terms of assembly, homohexamer. Requires Mn(2+) as cofactor.

The catalysed reaction is beta-L-arabinopyranose = L-ribulose. Its pathway is carbohydrate degradation; L-arabinose degradation via L-ribulose; D-xylulose 5-phosphate from L-arabinose (bacterial route): step 1/3. Its function is as follows. Catalyzes the conversion of L-arabinose to L-ribulose. This Salmonella enteritidis PT4 (strain P125109) protein is L-arabinose isomerase.